We begin with the raw amino-acid sequence, 585 residues long: DNA ligase (585 aa).

Glu278 lines the ATP pocket. Lys280 acts as the N6-AMP-lysine intermediate in catalysis. ATP contacts are provided by Arg285, Arg301, Glu330, Phe370, Arg444, and Lys450.

The protein belongs to the ATP-dependent DNA ligase family. It depends on Mg(2+) as a cofactor.

It carries out the reaction ATP + (deoxyribonucleotide)n-3'-hydroxyl + 5'-phospho-(deoxyribonucleotide)m = (deoxyribonucleotide)n+m + AMP + diphosphate.. In terms of biological role, DNA ligase that seals nicks in double-stranded DNA during DNA replication, DNA recombination and DNA repair. This is DNA ligase from Haloferax volcanii (strain ATCC 29605 / DSM 3757 / JCM 8879 / NBRC 14742 / NCIMB 2012 / VKM B-1768 / DS2) (Halobacterium volcanii).